The following is a 186-amino-acid chain: Large ribosomal subunit protein uL5 (186 aa).

The protein belongs to the universal ribosomal protein uL5 family. In terms of assembly, part of the 50S ribosomal subunit; part of the 5S rRNA/L5/L18/L25 subcomplex. Contacts the 5S rRNA and the P site tRNA. Forms a bridge to the 30S subunit in the 70S ribosome.

This is one of the proteins that bind and probably mediate the attachment of the 5S RNA into the large ribosomal subunit, where it forms part of the central protuberance. In the 70S ribosome it contacts protein S13 of the 30S subunit (bridge B1b), connecting the 2 subunits; this bridge is implicated in subunit movement. Contacts the P site tRNA; the 5S rRNA and some of its associated proteins might help stabilize positioning of ribosome-bound tRNAs. The protein is Large ribosomal subunit protein uL5 of Phenylobacterium zucineum (strain HLK1).